The following is a 234-amino-acid chain: Sperm flagellar protein 1 (234 aa).

A Calponin-homology (CH) domain is found at 7–112; that stretch reads EEALHQLYLW…VLIPLRQRLE (106 aa). Positions 181–234 are essential for homodimerization and microtubule bundling activity; the sequence is VLQIAEKEQELLASQETVQVLQMKVKRLEHLLQLKNVRIDDLSRRLQQAERKQR.

Homodimer. Interacts with actin, TJP1, CGN and CDH1. In terms of tissue distribution, expressed predominantly in the seminiferous epithelium of adult testis. Expressed in pillar cells of the organ of Corti (at protein level). Expressed in brain, kidney, lung and testis. Highly expressed in the trachea, lung and oviduct.

It localises to the cytoplasm. The protein localises to the cell projection. Its subcellular location is the cilium. It is found in the flagellum. The protein resides in the cytoskeleton. It localises to the cilium axoneme. The protein localises to the apical cell membrane. Its subcellular location is the basolateral cell membrane. It is found in the stress fiber. The protein resides in the microvillus. It localises to the lamellipodium. The protein localises to the filopodium. Its function is as follows. Microtubule-associated protein that promotes microtubule bundling and stabilizes microtubules against depolymerization in response to cold shock. Microtubule-associated protein involved in the stabilization of microtubules along the axis of migration during radial intercalation. Promotes the establishment and stabilization of an axis of microtubules required for the active migration of cells into the outer epithelium. Essential for ciliary central apparatus formation which requires both its microtubule-binding and bundling activities and for ciliary localization of HYDIN and SPAG6 in ependymal cilia. Binds actin in intestinal epithelial cells (IECs), essential for IECs survival and contributes to formation of filopodia and lamellipodia in migrating IECs. Regulates planar cell polarity signaling pathway and asymmetric microtubule accumulation in ciliated epithelia. The polypeptide is Sperm flagellar protein 1 (Spef1) (Mus musculus (Mouse)).